The sequence spans 205 residues: Small ribosomal subunit protein uS4 (205 aa).

A disordered region spans residues 14 to 49 (RMGENIWGRPKSPVNRREYGPGQHGQRRKGKMSDFG). In terms of domain architecture, S4 RNA-binding spans 94-157 (SRLDAIVYRA…KQLVTVLEAV (64 aa)).

Belongs to the universal ribosomal protein uS4 family. As to quaternary structure, part of the 30S ribosomal subunit. Contacts protein S5. The interaction surface between S4 and S5 is involved in control of translational fidelity.

In terms of biological role, one of the primary rRNA binding proteins, it binds directly to 16S rRNA where it nucleates assembly of the body of the 30S subunit. With S5 and S12 plays an important role in translational accuracy. This is Small ribosomal subunit protein uS4 from Agrobacterium fabrum (strain C58 / ATCC 33970) (Agrobacterium tumefaciens (strain C58)).